The sequence spans 222 residues: Probable glutathione-independent glyoxalase hsp3104 (222 aa).

Active-site residues include Cys-124, His-125, and Glu-155.

Belongs to the peptidase C56 family. HSP31-like subfamily.

The protein localises to the cytoplasm. It catalyses the reaction methylglyoxal + H2O = (R)-lactate + H(+). Functionally, catalyzes the conversion of methylglyoxal (MG) to D-lactate in a single glutathione (GSH)-independent step. May play a role in detoxifying endogenously produced glyoxals. Involved in protection against reactive oxygen species (ROS). This is Probable glutathione-independent glyoxalase hsp3104 from Schizosaccharomyces pombe (strain 972 / ATCC 24843) (Fission yeast).